We begin with the raw amino-acid sequence, 361 residues long: MGKVHRPRRGSLAFSPRKRAKSIVPRIRSWPKETEVRMLGFAGYKAGMTHILMIDDEPGLTNGKEIFMPVTIIETPPLRVFGIRAYRQGYLGLETATEVIVPDFELDNYVSKKAKGRKFTFYQLLKRRIATLPKNYTKDDFEQKLGNLEDMIKEGEIVEVRALVATQPWVIKLKKKPEVMEYAIGGTSVEEKFNYIKEKLGKELRVGEVLKEGELLDVIAVTKGKGTQGPVKRWGIKLRAHKDSKGRRKVGSIGPWHPARVMWTVPMAGQMGFHHRTELNKRLIAIGENGKLVIDGNEIEITPKGGFPHYGIVRSDFMMIAGSVPGAIKRIIRVRPAIRPPKKKPPVQRPQITYVSVESKQ.

Positions 339–361 are disordered; the sequence is RPPKKKPPVQRPQITYVSVESKQ. The segment covering 350 to 361 has biased composition (polar residues); that stretch reads PQITYVSVESKQ.

The protein belongs to the universal ribosomal protein uL3 family. Part of the 50S ribosomal subunit. Forms a cluster with proteins L14 and L24e.

One of the primary rRNA binding proteins, it binds directly near the 3'-end of the 23S rRNA, where it nucleates assembly of the 50S subunit. In Pyrococcus abyssi (strain GE5 / Orsay), this protein is Large ribosomal subunit protein uL3.